The sequence spans 954 residues: Glycine dehydrogenase (decarboxylating) (954 aa).

Lysine 704 is modified (N6-(pyridoxal phosphate)lysine).

The protein belongs to the GcvP family. As to quaternary structure, the glycine cleavage system is composed of four proteins: P, T, L and H. Pyridoxal 5'-phosphate is required as a cofactor.

The catalysed reaction is N(6)-[(R)-lipoyl]-L-lysyl-[glycine-cleavage complex H protein] + glycine + H(+) = N(6)-[(R)-S(8)-aminomethyldihydrolipoyl]-L-lysyl-[glycine-cleavage complex H protein] + CO2. In terms of biological role, the glycine cleavage system catalyzes the degradation of glycine. The P protein binds the alpha-amino group of glycine through its pyridoxal phosphate cofactor; CO(2) is released and the remaining methylamine moiety is then transferred to the lipoamide cofactor of the H protein. The chain is Glycine dehydrogenase (decarboxylating) from Rhizobium meliloti (strain 1021) (Ensifer meliloti).